The primary structure comprises 339 residues: Intelectin-1 (339 aa).

An N-terminal signal peptide occupies residues 1-18; it reads MLSYSLLLLALAFPAGHA. The 51-residue stretch at 58–108 folds into the Fibrinogen C-terminal domain; that stretch reads GDMNYGYRSCNEIKSSDSRAPDGIYTLATEDGESYQTFCDMTTNGGGWTLV. An intrachain disulfide couples Cys67 to Cys96. His112, Glu113, Asn115, Gly118, Gly123, Asp124, and Asp159 together coordinate Ca(2+). Cystine bridges form between Cys120–Cys306, Cys225–Cys285, and Cys277–Cys291. Asn189 carries an N-linked (GlcNAc...) asparagine glycan. Ca(2+) contacts are provided by Asn286, Glu288, Glu300, and Asp308. A carbohydrate is bound by residues 288–289 and Glu300; that span reads EH.

In terms of assembly, homotrimer; disulfide-linked. Homohexamer; disulfide-linked. Forms primarily homotrimers in solution, but can also form homohexamers. In terms of processing, N-glycosylated.

Its subcellular location is the secreted. The protein resides in the cytoplasmic vesicle. It localises to the secretory vesicle. Lectin that specifically recognizes microbial carbohydrate chains in a calcium-dependent manner. Binds to microbial glycans that contain a terminal acyclic 1,2-diol moiety, including beta-linked D-galactofuranose (beta-Galf) and D-phosphoglycerol-modified glycans. Binds to S.pneumoniae serotypes with glycans that contain beta-linked D-galactofuranose (beta-Galf) and with D-phosphoglycerol-modified glycans. Can bind a variety of monosaccharides (in vitro). Probably plays a role in the defense system against microorganisms. The protein is Intelectin-1 (itln1) of Xenopus laevis (African clawed frog).